A 641-amino-acid chain; its full sequence is Leucine-rich repeat protein soc-2 homolog (641 aa).

Low complexity predominate over residues 1–19 (MNLCSSGATASTTSLSSTG). Residues 1-146 (MNLCSSGATA…TTKKSKPIQA (146 aa)) are disordered. Residues 24 to 56 (SGGGGVAGGGGISNGGGGGGGVTGSGGGGGGNT) are compositionally biased toward gly residues. Over residues 96–106 (GAQQPSGSNGQ) the composition is skewed to low complexity. 20 LRR repeats span residues 161–182 (GIKRLDLSKSSITVIPSTVKDC), 184–205 (QITELYLYSNKIGQLPPEIGCL), 207–228 (NLRNLALNENSLTSLPESLQNC), 230–251 (QLKVLDLRHNKLAEIPPVIYRL), 253–274 (SLTTLYLRFNRITAVADDLRQL), 276–297 (NLTMLSLRENKIRELGSAIGAL), 299–320 (NLTTLDVSHNHLEHLPEDIGNC), 322–343 (NLSALDLQHNELLDIPDSIGNL), 345–367 (SLVRLGMRYNRLTSVPATLKNCK), 368–389 (CMDEFNVEGNGITQLPDGMLAS), 392–413 (GLTTITLSRNQFTSYPTGGPAQ), 416–437 (NVYSINLEHNRIDKIPYGIFSR), 440–461 (GLTKLNMKENMLTALPLDIGTW), 463–484 (NMVELNLATNALQKLPDDIMNL), 486–507 (NLEILILSNNMLKKIPNTIGNL), 509–530 (RLRILDLEENRIETLPHEIGLL), 532–553 (ELQRLILQTNQITMLPRSIGHL), 555–576 (NLTHLSVSENNLQFLPEEIGSL), 578–600 (SLENLYINQNPGLEKLPFELALC), and 602–623 (NLKYLNIDKCPLSTIPPEIQAG).

The protein belongs to the SHOC2 family.

Acts as a Ras effector and participates in MAPK pathway activation. Probably acts as a regulatory subunit of protein phosphatase that specifically dephosphorylates Raf kinase and stimulate Raf activity at specialized signaling complexes upon Ras activation. In Drosophila ananassae (Fruit fly), this protein is Leucine-rich repeat protein soc-2 homolog (Sur-8).